The primary structure comprises 560 residues: Factor VII-activating protease (560 aa).

The N-terminal stretch at M1–G23 is a signal peptide. An N-linked (GlcNAc...) asparagine glycan is attached at N54. 3 consecutive EGF-like domains span residues Q73–Q109, V111–S148, and V150–E188. 18 disulfide bridges follow: C77–C88, C82–C97, C99–C108, C115–C125, C120–C136, C138–C147, C154–C165, C159–C176, C178–C187, C194–C276, C215–C257, C246–C271, C301–C435, C347–C363, C355–C424, C447–C515, C477–C493, and C505–C533. The region spanning D193 to C276 is the Kringle domain. A glycan (N-linked (GlcNAc...) asparagine) is linked at N207. In terms of domain architecture, Peptidase S1 spans I314–K555. Catalysis depends on charge relay system residues H362 and D411. Residue S509 is the Charge relay system of the active site.

Belongs to the peptidase S1 family. In terms of assembly, heterodimer; disulfide-linked. Heterodimer of a 50 kDa heavy and a 27 kDa light chain linked by a disulfide bond. In terms of processing, proteolytic cleavage at Gly-23 or Met-27 can give rise to the 50 kDa heavy chain (HC) and cleavage at Arg-313 or Lys-319 can give rise to the 27 kDa light chain (LC). The HC can undergo further proteolytic cleavage giving rise to a 26 kDa fragment. The LC can undergo further proteolytic cleavage at Arg-313 leading to a 17-kDa fragment and at Arg-480 leading to a 8-kDa fragment. In terms of tissue distribution, ubiquitously expressed.

It is found in the secreted. Its function is as follows. Cleaves the alpha-chain at multiple sites and the beta-chain between 'Lys-53' and 'Lys-54' but not the gamma-chain of fibrinogen and therefore does not initiate the formation of the fibrin clot and does not cause the fibrinolysis directly. It does not cleave (activate) prothrombin and plasminogen but converts the inactive single chain urinary plasminogen activator (pro-urokinase) to the active two chain form. Activates coagulation factor VII. May function as a tumor suppressor negatively regulating cell proliferation and cell migration. The chain is Factor VII-activating protease from Homo sapiens (Human).